The chain runs to 426 residues: Serine--tRNA ligase (426 aa).

An L-serine-binding site is contributed by 233 to 235; that stretch reads TAE. An ATP-binding site is contributed by 264-266; sequence RSE. Glu-287 provides a ligand contact to L-serine. 351-354 contacts ATP; sequence EISS. Residue Ser-387 participates in L-serine binding.

The protein belongs to the class-II aminoacyl-tRNA synthetase family. Type-1 seryl-tRNA synthetase subfamily. As to quaternary structure, homodimer. The tRNA molecule binds across the dimer.

The protein resides in the cytoplasm. The catalysed reaction is tRNA(Ser) + L-serine + ATP = L-seryl-tRNA(Ser) + AMP + diphosphate + H(+). It carries out the reaction tRNA(Sec) + L-serine + ATP = L-seryl-tRNA(Sec) + AMP + diphosphate + H(+). Its pathway is aminoacyl-tRNA biosynthesis; selenocysteinyl-tRNA(Sec) biosynthesis; L-seryl-tRNA(Sec) from L-serine and tRNA(Sec): step 1/1. Functionally, catalyzes the attachment of serine to tRNA(Ser). Is also able to aminoacylate tRNA(Sec) with serine, to form the misacylated tRNA L-seryl-tRNA(Sec), which will be further converted into selenocysteinyl-tRNA(Sec). The polypeptide is Serine--tRNA ligase (Pseudomonas putida (strain ATCC 700007 / DSM 6899 / JCM 31910 / BCRC 17059 / LMG 24140 / F1)).